A 1692-amino-acid polypeptide reads, in one-letter code: Fatty acid synthase alpha subunit hexA (1692 aa).

Residues 44–80 are disordered; sequence AVEEPVDETPAPETAPERPPLSRAKTAAVKPQETAAP. In terms of domain architecture, Carrier spans 90–174; the sequence is LSAEEIVRAL…RVSSALLSKL (85 aa). The residue at position 125 (Ser-125) is an O-(pantetheine 4'-phosphoryl)serine. Positions 508–746 are ketoreductase (KR) domain; that stretch reads FAGKNILITG…IAMLMTPELV (239 aa). A Ketosynthase family 3 (KS3) domain is found at 948–1430; sequence KEYLHEVAVE…QKGGQVVGVA (483 aa). Cys-1135 serves as the catalytic For beta-ketoacyl synthase activity. The interval 1263 to 1287 is disordered; it reads GQAQLDKSSPSTNTTSRTSSVSLAR. A compositionally biased stretch (low complexity) spans 1270–1284; the sequence is SSPSTNTTSRTSSVS. Residues His-1315 and His-1356 each act as for beta-ketoacyl synthase activity in the active site. Residue Asp-1569 coordinates Mg(2+). Acetyl-CoA contacts are provided by residues 1569–1571, 1615–1625, 1639–1642, and 1668–1670; these read DLV, EAVFKCLHTQT, KSDN, and ISH. Ser-1669 is a binding site for Mg(2+).

This sequence belongs to the thiolase-like superfamily. Fungal fatty acid synthetase subunit alpha family. In terms of assembly, [Alpha(6)beta(6)] hexamers of two multifunctional subunits (alpha and beta). Post-translationally, 4'-phosphopantetheine is transferred from CoA to a specific serine of the acyl carrier domain by the C-terminal PPT domain. This modification is essential for activity because fatty acids are bound in thioester linkage to the sulfhydryl of the prosthetic group.

It carries out the reaction acetyl-CoA + n malonyl-CoA + 2n NADPH + 4n H(+) = a long-chain-acyl-CoA + n CoA + n CO2 + 2n NADP(+).. It catalyses the reaction a fatty acyl-[ACP] + malonyl-[ACP] + H(+) = a 3-oxoacyl-[ACP] + holo-[ACP] + CO2. The enzyme catalyses a (3R)-hydroxyacyl-[ACP] + NADP(+) = a 3-oxoacyl-[ACP] + NADPH + H(+). The protein operates within mycotoxin biosynthesis. In terms of biological role, fatty acid synthase alpha subunit; part of the fragmented gene cluster that mediates the biosynthesis of dothistromin (DOTH), a polyketide toxin very similar in structure to the aflatoxin precursor, versicolorin B. The first step of the pathway is the conversion of acetate to norsolorinic acid (NOR) and requires the fatty acid synthase subunits hexA and hexB, as well as the polyketide synthase pksA. PksA combines a hexanoyl starter unit and 7 malonyl-CoA extender units to synthesize the precursor NOR. The hexanoyl starter unit is provided to the acyl-carrier protein (ACP) domain by the fungal fatty acid synthase hexA/hexB. The second step is the conversion of NOR to averantin (AVN) and requires the norsolorinic acid ketoreductase nor1, which catalyzes the dehydration of norsolorinic acid to form (1'S)-averantin. The cytochrome P450 monooxygenase avnA then catalyzes the hydroxylation of AVN to 5'hydroxyaverantin (HAVN). The next step is performed by adhA that transforms HAVN to averufin (AVF). Averufin might then be converted to hydroxyversicolorone by cypX and avfA. Hydroxyversicolorone is further converted versiconal hemiacetal acetate (VHA) by moxY. VHA is then the substrate for the versiconal hemiacetal acetate esterase est1 to yield versiconal (VAL). Versicolorin B synthase vbsA then converts VAL to versicolorin B (VERB) by closing the bisfuran ring. Then, the activity of the versicolorin B desaturase verB leads to versicolorin A (VERA). DotB, a predicted chloroperoxidase, may perform epoxidation of the A-ring of VERA. Alternatively, a cytochrome P450, such as cypX or avnA could catalyze this step. It is also possible that another, uncharacterized, cytochrome P450 enzyme is responsible for this step. Opening of the epoxide could potentially be achieved by the epoxide hydrolase epoA. However, epoA seems not to be required for DOTH biosynthesis, but other epoxide hydrolases may have the ability to complement this hydrolysis. Alternatively, opening of the epoxide ring could be achieved non-enzymatically. The next step is the deoxygenation of ring A to yield the 5,8-dihydroxyanthraquinone which is most likely catalyzed by the NADPH dehydrogenase encoded by ver1. The last stages of DOTH biosynthesis are proposed to involve hydroxylation of the bisfuran. OrdB and norB might have oxidative roles here. An alternative possibility is that cytochrome P450 monoogenases such as avnA and cypX might perform these steps in addition to previously proposed steps. This chain is Fatty acid synthase alpha subunit hexA, found in Dothistroma septosporum (strain NZE10 / CBS 128990) (Red band needle blight fungus).